Here is a 346-residue protein sequence, read N- to C-terminus: Threonylcarbamoyl-AMP synthase (346 aa).

In terms of domain architecture, YrdC-like spans 18-205 (DPQIAQAAAL…IPVLLRPGGI (188 aa)). Position 40 (Thr40) interacts with L-threonine. ATP is bound by residues Arg63 and Asn67. Residue His72 participates in L-threonine binding. Residue Thr123 participates in ATP binding. Residues Arg127 and Ala147 each coordinate L-threonine. ATP is bound by residues Ser149 and Ser157. Ser187 contacts L-threonine. Residues Arg201 and Tyr240 each contribute to the ATP site.

Belongs to the SUA5 family.

The protein resides in the cytoplasm. The catalysed reaction is L-threonine + hydrogencarbonate + ATP = L-threonylcarbamoyladenylate + diphosphate + H2O. Required for the formation of a threonylcarbamoyl group on adenosine at position 37 (t(6)A37) in tRNAs that read codons beginning with adenine. Catalyzes the conversion of L-threonine, HCO(3)(-)/CO(2) and ATP to give threonylcarbamoyl-AMP (TC-AMP) as the acyladenylate intermediate, with the release of diphosphate. Is also able to catalyze the reverse reaction in vitro, i.e. the formation of ATP from TC-AMP and PPi. The chain is Threonylcarbamoyl-AMP synthase (ywlC) from Bacillus subtilis (strain 168).